Consider the following 486-residue polypeptide: Glutamyl-tRNA(Gln) amidotransferase subunit A (486 aa).

Residues K79 and S154 each act as charge relay system in the active site. Residue S178 is the Acyl-ester intermediate of the active site.

The protein belongs to the amidase family. GatA subfamily. As to quaternary structure, heterotrimer of A, B and C subunits.

It catalyses the reaction L-glutamyl-tRNA(Gln) + L-glutamine + ATP + H2O = L-glutaminyl-tRNA(Gln) + L-glutamate + ADP + phosphate + H(+). Its function is as follows. Allows the formation of correctly charged Gln-tRNA(Gln) through the transamidation of misacylated Glu-tRNA(Gln) in organisms which lack glutaminyl-tRNA synthetase. The reaction takes place in the presence of glutamine and ATP through an activated gamma-phospho-Glu-tRNA(Gln). The protein is Glutamyl-tRNA(Gln) amidotransferase subunit A of Myxococcus xanthus (strain DK1622).